Reading from the N-terminus, the 189-residue chain is 6,7-dimethyl-8-ribityllumazine synthase (189 aa).

5-amino-6-(D-ribitylamino)uracil is bound by residues Trp31, 65–67 (SFE), and 89–91 (CVI). Position 94–95 (94–95 (ET)) interacts with (2S)-2-hydroxy-3-oxobutyl phosphate. Catalysis depends on His97, which acts as the Proton donor. Residue Phe122 participates in 5-amino-6-(D-ribitylamino)uracil binding. Position 136 (Arg136) interacts with (2S)-2-hydroxy-3-oxobutyl phosphate.

This sequence belongs to the DMRL synthase family.

It catalyses the reaction (2S)-2-hydroxy-3-oxobutyl phosphate + 5-amino-6-(D-ribitylamino)uracil = 6,7-dimethyl-8-(1-D-ribityl)lumazine + phosphate + 2 H2O + H(+). It functions in the pathway cofactor biosynthesis; riboflavin biosynthesis; riboflavin from 2-hydroxy-3-oxobutyl phosphate and 5-amino-6-(D-ribitylamino)uracil: step 1/2. Functionally, catalyzes the formation of 6,7-dimethyl-8-ribityllumazine by condensation of 5-amino-6-(D-ribitylamino)uracil with 3,4-dihydroxy-2-butanone 4-phosphate. This is the penultimate step in the biosynthesis of riboflavin. The chain is 6,7-dimethyl-8-ribityllumazine synthase from Flavobacterium psychrophilum (strain ATCC 49511 / DSM 21280 / CIP 103535 / JIP02/86).